The following is a 427-amino-acid chain: Enolase 1 (427 aa).

Q162 serves as a coordination point for (2R)-2-phosphoglycerate. The active-site Proton donor is the E204. 3 residues coordinate Mg(2+): D241, E285, and D312. (2R)-2-phosphoglycerate is bound by residues K337, R366, S367, and K388. K337 functions as the Proton acceptor in the catalytic mechanism.

It belongs to the enolase family. It depends on Mg(2+) as a cofactor.

The protein localises to the cytoplasm. Its subcellular location is the secreted. It localises to the cell surface. The catalysed reaction is (2R)-2-phosphoglycerate = phosphoenolpyruvate + H2O. It functions in the pathway carbohydrate degradation; glycolysis; pyruvate from D-glyceraldehyde 3-phosphate: step 4/5. Its function is as follows. Catalyzes the reversible conversion of 2-phosphoglycerate (2-PG) into phosphoenolpyruvate (PEP). It is essential for the degradation of carbohydrates via glycolysis. The sequence is that of Enolase 1 from Chlorobaculum tepidum (strain ATCC 49652 / DSM 12025 / NBRC 103806 / TLS) (Chlorobium tepidum).